The primary structure comprises 1555 residues: MAPPQEEGGGNGTELSMQRSRWATRRLTVKSGARKRLSLMTRAQAKNSATEKRQSGVTDDGSPAADGDQKEGSISSSNNGGSAPRKLYFNLPLPPELKDEEGHPIQQFPRNKIRTAKYTPLSFIPKNLWFQFHNIANIFFLFLVILVIFPIFGGVNPGLNSVPLIVIITVTAIKDAIEDYRRTILDIELNNAPVHRLQGWENVNVEKDNVSLWRRFKKANSRFFGSIWHLIERLWKEDAQSMRQRFASADPRMSIETRTAPWDPSHRRSVASHTEEIQMTPVPSPVPHDPDVPTVSSAIENEATLLQNLKGDLINHEIPVSGKARFHKDAWKNLVVGDFVRIYNDDELPADIIILATSDPDGACYVETKNLDGETNLKVRQALRCGRTLKHARDCERAQFVIESEPPQPNLYKYNGAIRWKQRVPWDPHGEPREMSEPIGIDNLLLRGCHLRNTEWALGVVVFTGHDTKIMMNAGITPSKRARIARELNFNVICNFGILLIMCLIAAIANGIAWGKTDASLAWFEYGSIGGTPALTGFITFWAAVIVFQNLVPISLYISLEIVRTLQAFFIYSDVGMYYEKIDQPCIPKSWNISDDVGQIEYIFSDKTGTLTQNVMEFKKATINGQPYGEAYTEAQAGMDRRRGINVEEEAKVIREEIAAAKVRAIRGLRELHDNPYLHDEDMTFIAPDFVEDLAGKNGPEQQQATEHFMLALALCHTVVAEKQPGDPPKMIFKAQSPDEAALVATARDMGFTVLGMSDGGINVNVMGKDMHFPVLSIIEFNSSRKRMSTIVRMPDGRILLFCKGADSVIYSRLKKGEQADMRRETAQHLEMFAVEGLRTLCIAERELSEEEYREWRREHDLAATALENREEKLEEVADKIERDLTLLGGTAIEDRLQDGVPDTIALLADAGIKLWVLTGDKVETAINIGFSCNLLNNDMDLLRLQVNESDASTEDDYLQLAEEQLKTNLERFNMTGDDEELKRARKDHNAPSPTYALVIDGFTLRWVLSDSLKQKFLLLCKQCKSVLCCRVSPAQKAAVVSMVKNGLDVMTLSIGDGANDVAMIQEADVGVGIAGEEGRQAVMSSDFAIGQFRFLQRLVLVHGRWSYRRLAETISNFFYKNMIWTWSIFWYQCYCNFDIAYIFEYTYILMFNLFFTSVPVILMGVLDQDVSDTVSLAVPQLYRRGIERKEWTQTKFWLYMIDGVYQSVMSFFIPFIFVVLTPTAAGNGLDVSERTRLGAYIAHPAVITINGYILINTYRWDWLMLLSIVLSDVFIFFWTGVYTATTYSAGFYQAAPQVYQELTFWMCLIVTPALCLLPRLVVKCIQKQRFPYDVDIIREQANRGDFAAADAAAVAALGGPERVEGESLGSLSSSGKGSGRSKKSKHQQYASVDEDRRPIYPPSIATHNTRAQNGSDGTTYIMQSRTSTELQQEMPFDRDREEETPAVRPSIERTRPSYDRIRRSIDRVRPSFEASNDFTSAARLSRIESTHSSLGHTYSHQRESYAGESSGAQQGQEPGQRRFNLATVRKRGLSAFSKKSIDTTEGEPPREPPM.

Residues 1–85 (MAPPQEEGGG…SSNNGGSAPR (85 aa)) are disordered. At 1-134 (MAPPQEEGGG…PKNLWFQFHN (134 aa)) the chain is on the cytoplasmic side. Residues 22–37 (WATRRLTVKSGARKRL) are compositionally biased toward basic residues. Residues 72 to 82 (GSISSSNNGGS) show a composition bias toward low complexity. A helical membrane pass occupies residues 135-155 (IANIFFLFLVILVIFPIFGGV). Asn156 is a topological domain (extracellular). The helical transmembrane segment at 157–177 (PGLNSVPLIVIITVTAIKDAI) threads the bilayer. Over 178–491 (EDYRRTILDI…ARIARELNFN (314 aa)) the chain is Cytoplasmic. The tract at residues 257 to 288 (TRTAPWDPSHRRSVASHTEEIQMTPVPSPVPH) is disordered. Residues 492–512 (VICNFGILLIMCLIAAIANGI) form a helical membrane-spanning segment. At 513 to 537 (AWGKTDASLAWFEYGSIGGTPALTG) the chain is on the extracellular side. The chain crosses the membrane as a helical span at residues 538–558 (FITFWAAVIVFQNLVPISLYI). Residues 559-1123 (SLEIVRTLQA…TISNFFYKNM (565 aa)) lie on the Cytoplasmic side of the membrane. Asp606 acts as the 4-aspartylphosphate intermediate in catalysis. ATP-binding residues include Asp606, Lys607, Thr608, Glu740, Phe781, Ser783, Lys786, Lys804, Arg839, Thr840, Thr919, Gly920, Asp921, Arg1031, and Lys1037. A Mg(2+)-binding site is contributed by Asp606. Mg(2+) is bound at residue Thr608. Asp1057 serves as a coordination point for Mg(2+). Asn1060 and Asp1061 together coordinate ATP. Asp1061 contacts Mg(2+). Residues 1124-1144 (IWTWSIFWYQCYCNFDIAYIF) traverse the membrane as a helical segment. Residues 1145–1146 (EY) lie on the Extracellular side of the membrane. The chain crosses the membrane as a helical span at residues 1147–1167 (TYILMFNLFFTSVPVILMGVL). Over 1168–1200 (DQDVSDTVSLAVPQLYRRGIERKEWTQTKFWLY) the chain is Cytoplasmic. Residues 1201–1221 (MIDGVYQSVMSFFIPFIFVVL) form a helical membrane-spanning segment. The Extracellular segment spans residues 1222-1237 (TPTAAGNGLDVSERTR). A helical membrane pass occupies residues 1238-1258 (LGAYIAHPAVITINGYILINT). The Cytoplasmic portion of the chain corresponds to 1259 to 1262 (YRWD). The helical transmembrane segment at 1263-1283 (WLMLLSIVLSDVFIFFWTGVY) threads the bilayer. The Extracellular segment spans residues 1284–1302 (TATTYSAGFYQAAPQVYQE). Residues 1303-1323 (LTFWMCLIVTPALCLLPRLVV) traverse the membrane as a helical segment. Position 1320 (Arg1320) interacts with a 1,2-diacyl-sn-glycero-3-phospho-L-serine. Residues 1324–1555 (KCIQKQRFPY…EGEPPREPPM (232 aa)) lie on the Cytoplasmic side of the membrane. Disordered regions lie at residues 1364 to 1456 (VEGE…ERTR) and 1489 to 1555 (ESTH…EPPM). Residues 1406–1432 (ATHNTRAQNGSDGTTYIMQSRTSTELQ) are compositionally biased toward polar residues. Basic and acidic residues-rich tracts occupy residues 1436–1456 (PFDR…ERTR) and 1540–1555 (KSID…EPPM).

Belongs to the cation transport ATPase (P-type) (TC 3.A.3) family. Type IV subfamily. In terms of assembly, component of a flippase complex consisting of DNF1 and CDC50. Interacts with CDC50; the interaction is direct. The cofactor is Mg(2+).

The protein resides in the cell membrane. The protein localises to the endosome membrane. It is found in the golgi apparatus. It localises to the trans-Golgi network membrane. It carries out the reaction ATP + H2O + phospholipidSide 1 = ADP + phosphate + phospholipidSide 2.. The catalysed reaction is a 1,2-diacyl-sn-glycero-3-phosphoethanolamine(out) + ATP + H2O = a 1,2-diacyl-sn-glycero-3-phosphoethanolamine(in) + ADP + phosphate + H(+). It catalyses the reaction a 1,2-diacyl-sn-glycero-3-phosphocholine(out) + ATP + H2O = a 1,2-diacyl-sn-glycero-3-phosphocholine(in) + ADP + phosphate + H(+). The enzyme catalyses a beta-D-glucosyl-(1&lt;-&gt;1')-N-acylsphing-4-enine(out) + ATP + H2O = a beta-D-glucosyl-(1&lt;-&gt;1')-N-acylsphing-4-enine(in) + ADP + phosphate + H(+). It carries out the reaction a 1,2-diacyl-sn-glycero-3-phospho-L-serine(out) + ATP + H2O = a 1,2-diacyl-sn-glycero-3-phospho-L-serine(in) + ADP + phosphate + H(+). Catalytic component of a P4-ATPase flippase complex which catalyzes the hydrolysis of ATP coupled to the transport of phosphatidylcholine and phosphatidylserine from the lumenal to the cytosolic leaflet of membranes and ensures the maintenance of asymmetric distribution of phospholipids. May also transport glucosylceramide and phosphatidylethanolamine. This Chaetomium thermophilum (strain DSM 1495 / CBS 144.50 / IMI 039719) (Thermochaetoides thermophila) protein is Phospholipid-transporting ATPase DNF1.